Reading from the N-terminus, the 84-residue chain is UPF0410 protein YmgE (84 aa).

Helical transmembrane passes span 1-21, 27-47, and 58-78; these read MGII…KLIM, GGFF…GWLA, and GFNL…LGVF.

Belongs to the UPF0410 family.

It is found in the cell inner membrane. This is UPF0410 protein YmgE (ymgE) from Escherichia coli O127:H6 (strain E2348/69 / EPEC).